We begin with the raw amino-acid sequence, 311 residues long: Cytochrome f (311 aa).

The first 27 residues, 1 to 27 (MKHFFKSLTLAIALAASVLFWSPQAQA), serve as a signal peptide directing secretion. The heme site is built by tyrosine 28, cysteine 48, cysteine 51, and histidine 52. Residues 279 to 296 (WLLVFFAAITLSQILLVL) form a helical membrane-spanning segment.

It belongs to the cytochrome f family. The 4 large subunits of the cytochrome b6-f complex are cytochrome b6, subunit IV (17 kDa polypeptide, PetD), cytochrome f and the Rieske protein, while the 4 small subunits are PetG, PetL, PetM and PetN. The complex functions as a dimer. Requires heme as cofactor.

Its subcellular location is the cellular thylakoid membrane. Its function is as follows. Component of the cytochrome b6-f complex, which mediates electron transfer between photosystem II (PSII) and photosystem I (PSI), cyclic electron flow around PSI, and state transitions. The chain is Cytochrome f from Synechococcus elongatus.